Reading from the N-terminus, the 147-residue chain is MGMLELVGEYWEQLKITVVPVVAAAEDDDNEQHEEKAAEGEEKEEENGDEDEDEDEDEDDDDDDDEDEEEEEEVTDQLEDLREHFKNTEEGKALVHHYEECAERVKIQQQQPGYADLEHKEDCVEEFFHLQHYLDTATAPRLFDKLK.

Residues 25 to 89 (AEDDDNEQHE…DLREHFKNTE (65 aa)) form a disordered region. Over residues 41 to 78 (EEKEEENGDEDEDEDEDEDDDDDDDEDEEEEEEVTDQL) the composition is skewed to acidic residues. Residues 79-89 (EDLREHFKNTE) show a composition bias toward basic and acidic residues. Cysteine 101 and cysteine 123 are disulfide-bonded.

It belongs to the UQCRH/QCR6 family. As to quaternary structure, component of the ubiquinol-cytochrome c oxidoreductase (cytochrome b-c1 complex, complex III, CIII), a multisubunit enzyme composed of 10 subunits. The complex is composed of 3 respiratory subunits cytochrome b (COB), cytochrome c1 (CYT1) and Rieske protein (RIP1), 2 core protein subunits COR1 and QCR2, and 5 low-molecular weight protein subunits QCR6, QCR7, QCR8, QCR9 and QCR10. The complex exists as an obligatory dimer and forms supercomplexes (SCs) in the inner mitochondrial membrane with a monomer or a dimer of cytochrome c oxidase (complex IV, CIV), resulting in 2 different assemblies (supercomplexes III(2)IV and III(2)IV(2)). QCR6 interacts with COX5A at the CIII-CIV interface.

The protein localises to the mitochondrion inner membrane. Component of the ubiquinol-cytochrome c oxidoreductase, a multisubunit transmembrane complex that is part of the mitochondrial electron transport chain which drives oxidative phosphorylation. The respiratory chain contains 3 multisubunit complexes succinate dehydrogenase (complex II, CII), ubiquinol-cytochrome c oxidoreductase (cytochrome b-c1 complex, complex III, CIII) and cytochrome c oxidase (complex IV, CIV), that cooperate to transfer electrons derived from NADH and succinate to molecular oxygen, creating an electrochemical gradient over the inner membrane that drives transmembrane transport and the ATP synthase. The cytochrome b-c1 complex catalyzes electron transfer from ubiquinol to cytochrome c, linking this redox reaction to translocation of protons across the mitochondrial inner membrane, with protons being carried across the membrane as hydrogens on the quinol. In the process called Q cycle, 2 protons are consumed from the matrix, 4 protons are released into the intermembrane space and 2 electrons are passed to cytochrome c. In Saccharomyces cerevisiae (strain ATCC 204508 / S288c) (Baker's yeast), this protein is Cytochrome b-c1 complex subunit 6, mitochondrial (QCR6).